The following is a 319-amino-acid chain: ATP-dependent 6-phosphofructokinase (319 aa).

An ATP-binding site is contributed by glycine 11. ADP is bound at residue 21–25 (RAAVR). ATP contacts are provided by residues 72 to 73 (RS) and 102 to 105 (GDGS). Aspartate 103 contacts Mg(2+). 125–127 (TID) contributes to the substrate binding site. Aspartate 127 (proton acceptor) is an active-site residue. Arginine 154 contacts ADP. Substrate is bound by residues arginine 162 and 169–171 (MGR). ADP is bound by residues 185-187 (GAE), arginine 211, and 213-215 (KKH). Substrate contacts are provided by residues glutamate 222, arginine 243, and 249-252 (HIQR).

This sequence belongs to the phosphofructokinase type A (PFKA) family. ATP-dependent PFK group I subfamily. Prokaryotic clade 'B1' sub-subfamily. In terms of assembly, homotetramer. Mg(2+) is required as a cofactor.

The protein resides in the cytoplasm. It catalyses the reaction beta-D-fructose 6-phosphate + ATP = beta-D-fructose 1,6-bisphosphate + ADP + H(+). The protein operates within carbohydrate degradation; glycolysis; D-glyceraldehyde 3-phosphate and glycerone phosphate from D-glucose: step 3/4. With respect to regulation, allosterically activated by ADP and other diphosphonucleosides, and allosterically inhibited by phosphoenolpyruvate. Its function is as follows. Catalyzes the phosphorylation of D-fructose 6-phosphate to fructose 1,6-bisphosphate by ATP, the first committing step of glycolysis. The polypeptide is ATP-dependent 6-phosphofructokinase (Brevibacillus brevis (strain 47 / JCM 6285 / NBRC 100599)).